Reading from the N-terminus, the 152-residue chain is Outer membrane protein assembly factor BamE (152 aa).

Residues Met-1 to Gly-32 form the signal peptide. Residue Cys-33 is the site of N-palmitoyl cysteine attachment. The S-diacylglycerol cysteine moiety is linked to residue Cys-33. Residues Ile-114–Glu-152 form a disordered region.

The protein belongs to the BamE family. Part of the Bam complex.

It localises to the cell outer membrane. Its function is as follows. Part of the outer membrane protein assembly complex, which is involved in assembly and insertion of beta-barrel proteins into the outer membrane. The protein is Outer membrane protein assembly factor BamE of Halomonas elongata (strain ATCC 33173 / DSM 2581 / NBRC 15536 / NCIMB 2198 / 1H9).